The primary structure comprises 292 residues: Bis(5'-nucleosyl)-tetraphosphatase, symmetrical (292 aa).

It belongs to the Ap4A hydrolase family.

It carries out the reaction P(1),P(4)-bis(5'-adenosyl) tetraphosphate + H2O = 2 ADP + 2 H(+). In terms of biological role, hydrolyzes diadenosine 5',5'''-P1,P4-tetraphosphate to yield ADP. This chain is Bis(5'-nucleosyl)-tetraphosphatase, symmetrical, found in Yersinia enterocolitica serotype O:8 / biotype 1B (strain NCTC 13174 / 8081).